A 513-amino-acid polypeptide reads, in one-letter code: ATP synthase subunit alpha (513 aa).

Residue 169–176 participates in ATP binding; that stretch reads GDRQTGKT.

This sequence belongs to the ATPase alpha/beta chains family. In terms of assembly, F-type ATPases have 2 components, CF(1) - the catalytic core - and CF(0) - the membrane proton channel. CF(1) has five subunits: alpha(3), beta(3), gamma(1), delta(1), epsilon(1). CF(0) has three main subunits: a(1), b(2) and c(9-12). The alpha and beta chains form an alternating ring which encloses part of the gamma chain. CF(1) is attached to CF(0) by a central stalk formed by the gamma and epsilon chains, while a peripheral stalk is formed by the delta and b chains.

It localises to the cell inner membrane. The enzyme catalyses ATP + H2O + 4 H(+)(in) = ADP + phosphate + 5 H(+)(out). Its function is as follows. Produces ATP from ADP in the presence of a proton gradient across the membrane. The alpha chain is a regulatory subunit. The chain is ATP synthase subunit alpha from Halorhodospira halophila (strain DSM 244 / SL1) (Ectothiorhodospira halophila (strain DSM 244 / SL1)).